Here is a 131-residue protein sequence, read N- to C-terminus: Small ribosomal subunit protein bS6 (131 aa).

An N6-acetyllysine modification is found at K93. The segment at 98–131 is disordered; sequence EASPMVKAKDERRERRDDFANETADDAEAGDSEE. Basic and acidic residues predominate over residues 104–116; the sequence is KAKDERRERRDDF. Acidic residues predominate over residues 120–131; the sequence is TADDAEAGDSEE.

It belongs to the bacterial ribosomal protein bS6 family.

Its function is as follows. Binds together with bS18 to 16S ribosomal RNA. In Escherichia fergusonii (strain ATCC 35469 / DSM 13698 / CCUG 18766 / IAM 14443 / JCM 21226 / LMG 7866 / NBRC 102419 / NCTC 12128 / CDC 0568-73), this protein is Small ribosomal subunit protein bS6.